A 288-amino-acid chain; its full sequence is ATP synthase gamma chain (288 aa).

The protein belongs to the ATPase gamma chain family. In terms of assembly, F-type ATPases have 2 components, CF(1) - the catalytic core - and CF(0) - the membrane proton channel. CF(1) has five subunits: alpha(3), beta(3), gamma(1), delta(1), epsilon(1). CF(0) has three main subunits: a, b and c.

The protein resides in the cell inner membrane. Functionally, produces ATP from ADP in the presence of a proton gradient across the membrane. The gamma chain is believed to be important in regulating ATPase activity and the flow of protons through the CF(0) complex. The chain is ATP synthase gamma chain from Paracidovorax citrulli (strain AAC00-1) (Acidovorax citrulli).